The chain runs to 1127 residues: Structural protein MDM1 (1127 aa).

The 189-residue stretch at 85 to 273 (NAQIGKELES…WNLRIVSLSQ (189 aa)) folds into the PXA domain. Phosphoserine occurs at positions 670, 673, and 692. Positions 705 to 762 (SNNFRDNIASLTISIDQIEKELELLRHLILKADLTNNQMQLKILKKSQRTLLKELEMK) form a coiled coil. Positions 782–905 (TKIYIRSYFS…RFLTDPTPFK (124 aa)) constitute a PX domain.

Belongs to the sorting nexin family.

It is found in the cytoplasm. Its function is as follows. Essential for mitotic growth. Mediates organelle inheritance. The sequence is that of Structural protein MDM1 (MDM1) from Saccharomyces cerevisiae (strain ATCC 204508 / S288c) (Baker's yeast).